A 450-amino-acid chain; its full sequence is Bifunctional protein GlmU (450 aa).

The interval Met1–Arg229 is pyrophosphorylase. Residues Leu8–Gly11, Lys22, Gln72, and Gly77–Thr78 contribute to the UDP-N-acetyl-alpha-D-glucosamine site. Asp102 is a binding site for Mg(2+). 3 residues coordinate UDP-N-acetyl-alpha-D-glucosamine: Gly139, Glu154, and Asn227. Asn227 serves as a coordination point for Mg(2+). A linker region spans residues Val230 to Asn250. The segment at Gly251–Lys450 is N-acetyltransferase. UDP-N-acetyl-alpha-D-glucosamine is bound by residues Arg332 and Lys350. Residue His362 is the Proton acceptor of the active site. UDP-N-acetyl-alpha-D-glucosamine-binding residues include Tyr365 and Asn376. Acetyl-CoA is bound by residues Asn385–Tyr386, Ala422, and Arg439.

The protein in the N-terminal section; belongs to the N-acetylglucosamine-1-phosphate uridyltransferase family. It in the C-terminal section; belongs to the transferase hexapeptide repeat family. As to quaternary structure, homotrimer. The cofactor is Mg(2+).

It is found in the cytoplasm. It catalyses the reaction alpha-D-glucosamine 1-phosphate + acetyl-CoA = N-acetyl-alpha-D-glucosamine 1-phosphate + CoA + H(+). The catalysed reaction is N-acetyl-alpha-D-glucosamine 1-phosphate + UTP + H(+) = UDP-N-acetyl-alpha-D-glucosamine + diphosphate. Its pathway is nucleotide-sugar biosynthesis; UDP-N-acetyl-alpha-D-glucosamine biosynthesis; N-acetyl-alpha-D-glucosamine 1-phosphate from alpha-D-glucosamine 6-phosphate (route II): step 2/2. It participates in nucleotide-sugar biosynthesis; UDP-N-acetyl-alpha-D-glucosamine biosynthesis; UDP-N-acetyl-alpha-D-glucosamine from N-acetyl-alpha-D-glucosamine 1-phosphate: step 1/1. It functions in the pathway bacterial outer membrane biogenesis; LPS lipid A biosynthesis. Functionally, catalyzes the last two sequential reactions in the de novo biosynthetic pathway for UDP-N-acetylglucosamine (UDP-GlcNAc). The C-terminal domain catalyzes the transfer of acetyl group from acetyl coenzyme A to glucosamine-1-phosphate (GlcN-1-P) to produce N-acetylglucosamine-1-phosphate (GlcNAc-1-P), which is converted into UDP-GlcNAc by the transfer of uridine 5-monophosphate (from uridine 5-triphosphate), a reaction catalyzed by the N-terminal domain. This chain is Bifunctional protein GlmU, found in Staphylococcus aureus (strain Mu50 / ATCC 700699).